The primary structure comprises 333 residues: MKTLGEFIVEKQHDFPHATGELTALLSAIKLGAKIIHRDINKAGLVDILGTSGAENVQGEVQMKLDLFANEKLKAALKARGQVAGIASEEEDEIVVFEGVENGKYVVLMDPLDGSSNIDVNVSVGTIFSIYRRITPLGTPVTKEDFLQPGNKQVAAGYVVYGSSTMLVYTTGCGVHAFTYDPSLGVFCLSHESVRFPATGQMYSINEGNYIKFPNGVKKYIKYCQEMDEATHRPYTSRYIGSLVSDFHRNLLKGGIYLYPSTATHPNGKLRLAYECNPIAFLAEQAGGKASDGKNRILDIQPHELHQRSAFFTGTESMVNDVERFIRDYPDNV.

Residues E89, D110, L112, and D113 each coordinate Mg(2+). Residues 113 to 116 (DGSS), N206, Y239, 257 to 259 (YLY), and K269 each bind substrate. Mg(2+) is bound at residue E275.

Belongs to the FBPase class 1 family. Homotetramer. Mg(2+) serves as cofactor.

It localises to the cytoplasm. It carries out the reaction beta-D-fructose 1,6-bisphosphate + H2O = beta-D-fructose 6-phosphate + phosphate. The protein operates within carbohydrate biosynthesis; gluconeogenesis. This chain is Fructose-1,6-bisphosphatase class 1, found in Sodalis glossinidius (strain morsitans).